The following is a 311-amino-acid chain: Phosphopantothenate--cysteine ligase (311 aa).

An N-acetylalanine modification is found at Ala2.

The protein belongs to the PPC synthetase family. As to quaternary structure, homodimer.

The catalysed reaction is (R)-4'-phosphopantothenate + L-cysteine + ATP = N-[(R)-4-phosphopantothenoyl]-L-cysteine + AMP + diphosphate + H(+). The enzyme catalyses (R)-4'-phosphopantothenate + L-cysteine + CTP = N-[(R)-4-phosphopantothenoyl]-L-cysteine + CMP + diphosphate + H(+). The protein operates within cofactor biosynthesis; coenzyme A biosynthesis; CoA from (R)-pantothenate: step 2/5. Catalyzes the second step in the biosynthesis of coenzyme A from vitamin B5, where cysteine is conjugated to 4'-phosphopantothenate to form 4-phosphopantothenoylcysteine. Has a preference for ATP over CTP as a cosubstrate. In Homo sapiens (Human), this protein is Phosphopantothenate--cysteine ligase (PPCS).